A 314-amino-acid chain; its full sequence is 3'-5' exoribonuclease YhaM (314 aa).

Residues 163–279 form the HD domain; it reads HVVSMLNLAK…LHYIDNLDAK (117 aa).

Belongs to the YhaM family.

Its function is as follows. Shows a 3'-5' exoribonuclease activity. The protein is 3'-5' exoribonuclease YhaM of Bacillus velezensis (strain DSM 23117 / BGSC 10A6 / LMG 26770 / FZB42) (Bacillus amyloliquefaciens subsp. plantarum).